The following is a 99-amino-acid chain: MSQERLLSVLRAPHISEKATNNAEKSNTVVLKVALDANKAEIAAAVAQLFEVKVDSVRTVVVKGKTKRRGNKMGRRSDWKKAYVTLAEGQNLDFVDSAE.

The protein belongs to the universal ribosomal protein uL23 family. As to quaternary structure, part of the 50S ribosomal subunit. Contacts protein L29, and trigger factor when it is bound to the ribosome.

One of the early assembly proteins it binds 23S rRNA. One of the proteins that surrounds the polypeptide exit tunnel on the outside of the ribosome. Forms the main docking site for trigger factor binding to the ribosome. In Haemophilus influenzae (strain 86-028NP), this protein is Large ribosomal subunit protein uL23.